Here is a 525-residue protein sequence, read N- to C-terminus: Coronin-2A (525 aa).

WD repeat units follow at residues 80 to 120 (GHRG…LTKN), 130 to 170 (GHAR…SVIM), 178 to 217 (CHQD…VLQE), 220 to 263 (YKGH…VPVT), and 269 to 308 (GSSG…PHLN). Residues 485–524 (QMFYRQQDEIRRLRELVTQREVQAKQLELEIRNLRMNSPR) are a coiled coil.

The protein belongs to the WD repeat coronin family. As to quaternary structure, binds actin. Component of the N-Cor repressor complex, at least composed of NCOR1, NCOR2, HDAC3, TBL1X, TBL1R, CORO2A and GPS2.

The chain is Coronin-2A (CORO2A) from Bos taurus (Bovine).